The following is a 205-amino-acid chain: Protein GrpE (205 aa).

Basic and acidic residues predominate over residues 1–18 (MSEEVKNSVETEENKASK). Residues 1 to 60 (MSEEVKNSVETEENKASKDNATQAPNPTENHNTAQETEKAENSEKTESATQENESLDKLK) form a disordered region. Positions 19-35 (DNATQAPNPTENHNTAQ) are enriched in polar residues. Residues 36-47 (ETEKAENSEKTE) show a composition bias toward basic and acidic residues.

It belongs to the GrpE family. In terms of assembly, homodimer.

Its subcellular location is the cytoplasm. Participates actively in the response to hyperosmotic and heat shock by preventing the aggregation of stress-denatured proteins, in association with DnaK and GrpE. It is the nucleotide exchange factor for DnaK and may function as a thermosensor. Unfolded proteins bind initially to DnaJ; upon interaction with the DnaJ-bound protein, DnaK hydrolyzes its bound ATP, resulting in the formation of a stable complex. GrpE releases ADP from DnaK; ATP binding to DnaK triggers the release of the substrate protein, thus completing the reaction cycle. Several rounds of ATP-dependent interactions between DnaJ, DnaK and GrpE are required for fully efficient folding. This is Protein GrpE from Chloroherpeton thalassium (strain ATCC 35110 / GB-78).